A 430-amino-acid polypeptide reads, in one-letter code: UDP-N-acetylglucosamine 1-carboxyvinyltransferase (430 aa).

Residue 22–23 (KN) coordinates phosphoenolpyruvate. R102 is a binding site for UDP-N-acetyl-alpha-D-glucosamine. Residue C126 is the Proton donor of the active site. Residue C126 is modified to 2-(S-cysteinyl)pyruvic acid O-phosphothioketal. UDP-N-acetyl-alpha-D-glucosamine contacts are provided by residues 131–135 (RPVDL), 172–175 (KVSV), D317, and I339.

This sequence belongs to the EPSP synthase family. MurA subfamily.

The protein localises to the cytoplasm. It catalyses the reaction phosphoenolpyruvate + UDP-N-acetyl-alpha-D-glucosamine = UDP-N-acetyl-3-O-(1-carboxyvinyl)-alpha-D-glucosamine + phosphate. It functions in the pathway cell wall biogenesis; peptidoglycan biosynthesis. Functionally, cell wall formation. Adds enolpyruvyl to UDP-N-acetylglucosamine. The sequence is that of UDP-N-acetylglucosamine 1-carboxyvinyltransferase from Sinorhizobium fredii (strain NBRC 101917 / NGR234).